The following is a 732-amino-acid chain: Coagulation factor XIII A chain (732 aa).

Positions 1 to 27 (MSETSRTAFGGRRAVPPNNSNAAEDDL) are disordered. The residue at position 2 (S2) is an N-acetylserine. A propeptide spans 2 to 38 (SETSRTAFGGRRAVPPNNSNAAEDDLPTVELQGVVPR) (activation peptide). Active-site residues include C315, H374, and D397. Positions 437, 439, 486, and 491 each coordinate Ca(2+). A glycan (N-linked (GlcNAc...) asparagine) is linked at N614.

It belongs to the transglutaminase superfamily. Transglutaminase family. As to quaternary structure, tetramer of two A chains (F13A1) and two B (F13B) chains. Ca(2+) serves as cofactor. The activation peptide is released by thrombin.

The protein localises to the cytoplasm. It localises to the secreted. It carries out the reaction L-glutaminyl-[protein] + L-lysyl-[protein] = [protein]-L-lysyl-N(6)-5-L-glutamyl-[protein] + NH4(+). Its function is as follows. Factor XIII is activated by thrombin and calcium ion to a transglutaminase that catalyzes the formation of gamma-glutamyl-epsilon-lysine cross-links between fibrin chains, thus stabilizing the fibrin clot. Also cross-link alpha-2-plasmin inhibitor, or fibronectin, to the alpha chains of fibrin. The polypeptide is Coagulation factor XIII A chain (F13A1) (Homo sapiens (Human)).